The primary structure comprises 257 residues: Acetyl-coenzyme A carboxylase carboxyl transferase subunit beta (257 aa).

The region spanning 5–257 (VFTKCERCKQ…DLERLLGFVG (253 aa)) is the CoA carboxyltransferase N-terminal domain. C9, C12, C28, and C31 together coordinate Zn(2+). The segment at 9–31 (CERCKQPVYEKDLRARFNVCPNC) adopts a C4-type zinc-finger fold.

The protein belongs to the AccD/PCCB family. As to quaternary structure, acetyl-CoA carboxylase is a heterohexamer composed of biotin carboxyl carrier protein (AccB), biotin carboxylase (AccC) and two subunits each of ACCase subunit alpha (AccA) and ACCase subunit beta (AccD). It depends on Zn(2+) as a cofactor.

The protein resides in the cytoplasm. It catalyses the reaction N(6)-carboxybiotinyl-L-lysyl-[protein] + acetyl-CoA = N(6)-biotinyl-L-lysyl-[protein] + malonyl-CoA. It functions in the pathway lipid metabolism; malonyl-CoA biosynthesis; malonyl-CoA from acetyl-CoA: step 1/1. Its function is as follows. Component of the acetyl coenzyme A carboxylase (ACC) complex. Biotin carboxylase (BC) catalyzes the carboxylation of biotin on its carrier protein (BCCP) and then the CO(2) group is transferred by the transcarboxylase to acetyl-CoA to form malonyl-CoA. The chain is Acetyl-coenzyme A carboxylase carboxyl transferase subunit beta from Rubrobacter xylanophilus (strain DSM 9941 / JCM 11954 / NBRC 16129 / PRD-1).